The chain runs to 201 residues: Small ribosomal subunit protein uS4 (201 aa).

The interval 19 to 41 (LVGGSSAYEKRPYPPGQHGRARI) is disordered. The S4 RNA-binding domain maps to 91–157 (SRLDNVVYRA…LPFEVARETA (67 aa)).

It belongs to the universal ribosomal protein uS4 family. Part of the 30S ribosomal subunit. Contacts protein S5. The interaction surface between S4 and S5 is involved in control of translational fidelity.

Functionally, one of the primary rRNA binding proteins, it binds directly to 16S rRNA where it nucleates assembly of the body of the 30S subunit. With S5 and S12 plays an important role in translational accuracy. This chain is Small ribosomal subunit protein uS4, found in Mycobacteroides abscessus (strain ATCC 19977 / DSM 44196 / CCUG 20993 / CIP 104536 / JCM 13569 / NCTC 13031 / TMC 1543 / L948) (Mycobacterium abscessus).